Consider the following 83-residue polypeptide: MTLIAILTCAAALVLHTTAAEELEAESQLMEVGMPDTELEAVDEERLFECSVSCEIEKEGNKDCKKKKCKGGWKCKFNMCVKI.

Positions 1–20 (MTLIAILTCAAALVLHTTAA) are cleaved as a signal peptide. A propeptide spanning residues 21–46 (EELEAESQLMEVGMPDTELEAVDEER) is cleaved from the precursor. 3 disulfide bridges follow: C50–C64, C54–C75, and C69–C80.

Belongs to the neurotoxin 12 (Hwtx-2) family. 02 (Hwtx-2) subfamily. In terms of tissue distribution, expressed by the venom gland.

It is found in the secreted. In terms of biological role, postsynaptic neurotoxin. This is U4-theraphotoxin-Hhn1x from Cyriopagopus hainanus (Chinese bird spider).